We begin with the raw amino-acid sequence, 456 residues long: ATP synthase subunit beta 1 (456 aa).

Position 152 to 159 (152 to 159 (GGAGVGKS)) interacts with ATP.

Belongs to the ATPase alpha/beta chains family. F-type ATPases have 2 components, CF(1) - the catalytic core - and CF(0) - the membrane proton channel. CF(1) has five subunits: alpha(3), beta(3), gamma(1), delta(1), epsilon(1). CF(0) has three main subunits: a(1), b(2) and c(9-12). The alpha and beta chains form an alternating ring which encloses part of the gamma chain. CF(1) is attached to CF(0) by a central stalk formed by the gamma and epsilon chains, while a peripheral stalk is formed by the delta and b chains.

The protein localises to the cell membrane. The enzyme catalyses ATP + H2O + 4 H(+)(in) = ADP + phosphate + 5 H(+)(out). Functionally, produces ATP from ADP in the presence of a proton gradient across the membrane. The catalytic sites are hosted primarily by the beta subunits. The chain is ATP synthase subunit beta 1 from Listeria welshimeri serovar 6b (strain ATCC 35897 / DSM 20650 / CCUG 15529 / CIP 8149 / NCTC 11857 / SLCC 5334 / V8).